Consider the following 156-residue polypeptide: Small ribosomal subunit protein uS7 (156 aa).

The protein belongs to the universal ribosomal protein uS7 family. In terms of assembly, part of the 30S ribosomal subunit. Contacts proteins S9 and S11.

In terms of biological role, one of the primary rRNA binding proteins, it binds directly to 16S rRNA where it nucleates assembly of the head domain of the 30S subunit. Is located at the subunit interface close to the decoding center, probably blocks exit of the E-site tRNA. In Streptococcus pyogenes serotype M1, this protein is Small ribosomal subunit protein uS7.